The primary structure comprises 199 residues: Thymidine kinase (199 aa).

ATP-binding positions include 15–22 (GSMFSGKS) and 88–91 (DEVQ). Residue Glu89 is the Proton acceptor of the active site. Residues Cys145, Cys148, Cys183, and His186 each coordinate Zn(2+).

This sequence belongs to the thymidine kinase family. In terms of assembly, homotetramer.

It localises to the cytoplasm. It carries out the reaction thymidine + ATP = dTMP + ADP + H(+). The protein is Thymidine kinase of Staphylococcus aureus (strain Mu50 / ATCC 700699).